Consider the following 240-residue polypeptide: 1-(5-phosphoribosyl)-5-[(5-phosphoribosylamino)methylideneamino] imidazole-4-carboxamide isomerase (240 aa).

The active-site Proton acceptor is the Asp-9. The active-site Proton donor is the Asp-131.

Belongs to the HisA/HisF family.

It localises to the cytoplasm. The enzyme catalyses 1-(5-phospho-beta-D-ribosyl)-5-[(5-phospho-beta-D-ribosylamino)methylideneamino]imidazole-4-carboxamide = 5-[(5-phospho-1-deoxy-D-ribulos-1-ylimino)methylamino]-1-(5-phospho-beta-D-ribosyl)imidazole-4-carboxamide. The protein operates within amino-acid biosynthesis; L-histidine biosynthesis; L-histidine from 5-phospho-alpha-D-ribose 1-diphosphate: step 4/9. The chain is 1-(5-phosphoribosyl)-5-[(5-phosphoribosylamino)methylideneamino] imidazole-4-carboxamide isomerase from Cytophaga hutchinsonii (strain ATCC 33406 / DSM 1761 / CIP 103989 / NBRC 15051 / NCIMB 9469 / D465).